We begin with the raw amino-acid sequence, 273 residues long: Dermonecrotic toxin LspaSicTox-alphaIA1iii (273 aa).

The active site involves His5. Glu25 and Asp27 together coordinate Mg(2+). His41 acts as the Nucleophile in catalysis. 2 disulfide bridges follow: Cys45–Cys51 and Cys47–Cys190. Asp85 contributes to the Mg(2+) binding site.

It belongs to the arthropod phospholipase D family. Class II subfamily. Requires Mg(2+) as cofactor. As to expression, expressed by the venom gland.

It is found in the secreted. The catalysed reaction is an N-(acyl)-sphingosylphosphocholine = an N-(acyl)-sphingosyl-1,3-cyclic phosphate + choline. The enzyme catalyses an N-(acyl)-sphingosylphosphoethanolamine = an N-(acyl)-sphingosyl-1,3-cyclic phosphate + ethanolamine. It carries out the reaction a 1-acyl-sn-glycero-3-phosphocholine = a 1-acyl-sn-glycero-2,3-cyclic phosphate + choline. It catalyses the reaction a 1-acyl-sn-glycero-3-phosphoethanolamine = a 1-acyl-sn-glycero-2,3-cyclic phosphate + ethanolamine. Functionally, dermonecrotic toxins cleave the phosphodiester linkage between the phosphate and headgroup of certain phospholipids (sphingolipid and lysolipid substrates), forming an alcohol (often choline) and a cyclic phosphate. This toxin acts on sphingomyelin (SM). It may also act on ceramide phosphoethanolamine (CPE), lysophosphatidylcholine (LPC) and lysophosphatidylethanolamine (LPE), but not on lysophosphatidylserine (LPS), and lysophosphatidylglycerol (LPG). It acts by transphosphatidylation, releasing exclusively cyclic phosphate products as second products. Induces dermonecrosis, hemolysis, increased vascular permeability, edema, inflammatory response, and platelet aggregation. The chain is Dermonecrotic toxin LspaSicTox-alphaIA1iii from Loxosceles spadicea (Recluse spider).